We begin with the raw amino-acid sequence, 354 residues long: MPASPLVWINGLHMTEQRPIAVLGGGSFGTAVANLLAENGHQVRQWMRDPEQAEAIRVNRENPRYLKGIKILPGVTAVTDLQETLDACELCFVALPSSALRTVLAAHAERLSGKMLVSLTKGIEAQTFKLMSQILEEIAPQARIGVLSGPNLAREIAEHALTATVVASEDEELCKAVQAALHGRTFRVYASADRFGVELGGALKNVYAIIAGMAVALEMGENTKSMLITRALAEMTRFAVNQGANPMTFLGLAGVGDLIVTCSSPKSRNYQVGFALGQGLSLDEAVSRLGEVAEGVNTLKVLKAKAQEVGVYMPLVAGLHAILFEGRTLEQVIGLLMRAEPKTDVDFISTSGFN.

Positions 27, 28, 48, and 121 each coordinate NADPH. The sn-glycerol 3-phosphate site is built by lysine 121 and glycine 149. Alanine 153 lines the NADPH pocket. Residues lysine 204, aspartate 257, serine 267, arginine 268, and asparagine 269 each coordinate sn-glycerol 3-phosphate. Lysine 204 functions as the Proton acceptor in the catalytic mechanism. Arginine 268 serves as a coordination point for NADPH. Valine 292 and glutamate 294 together coordinate NADPH.

This sequence belongs to the NAD-dependent glycerol-3-phosphate dehydrogenase family.

Its subcellular location is the cytoplasm. The catalysed reaction is sn-glycerol 3-phosphate + NAD(+) = dihydroxyacetone phosphate + NADH + H(+). It catalyses the reaction sn-glycerol 3-phosphate + NADP(+) = dihydroxyacetone phosphate + NADPH + H(+). The protein operates within membrane lipid metabolism; glycerophospholipid metabolism. Its function is as follows. Catalyzes the reduction of the glycolytic intermediate dihydroxyacetone phosphate (DHAP) to sn-glycerol 3-phosphate (G3P), the key precursor for phospholipid synthesis. The protein is Glycerol-3-phosphate dehydrogenase [NAD(P)+] of Pseudomonas fluorescens (strain Pf0-1).